Consider the following 695-residue polypeptide: Elongation factor G (695 aa).

The region spanning 8–282 (EKTRNIGIMA…AVLDYLPAPT (275 aa)) is the tr-type G domain. GTP is bound by residues 17–24 (AHIDAGKT), 81–85 (DTPGH), and 135–138 (NKMD).

It belongs to the TRAFAC class translation factor GTPase superfamily. Classic translation factor GTPase family. EF-G/EF-2 subfamily.

The protein resides in the cytoplasm. Its function is as follows. Catalyzes the GTP-dependent ribosomal translocation step during translation elongation. During this step, the ribosome changes from the pre-translocational (PRE) to the post-translocational (POST) state as the newly formed A-site-bound peptidyl-tRNA and P-site-bound deacylated tRNA move to the P and E sites, respectively. Catalyzes the coordinated movement of the two tRNA molecules, the mRNA and conformational changes in the ribosome. The protein is Elongation factor G of Listeria welshimeri serovar 6b (strain ATCC 35897 / DSM 20650 / CCUG 15529 / CIP 8149 / NCTC 11857 / SLCC 5334 / V8).